A 570-amino-acid chain; its full sequence is Developmental and secondary metabolism regulator veA (570 aa).

4 disordered regions span residues 1–24, 39–60, 266–491, and 504–541; these read MATR…ISRE, ERAR…VDPP, DMYA…LGSG, and KRSH…DYGR. The region spanning 25-231 is the Velvet domain; it reads GKKITYKLSV…AEQGCRVRIR (207 aa). Positions 39-44 match the Nuclear localization signal motif; that stretch reads ERARAC. Residues 278–287 show a composition bias toward polar residues; the sequence is STSISTTADT. Positions 315-335 are enriched in low complexity; the sequence is SMPAASAAPAPAPVHSPATSA. 3 stretches are compositionally biased toward polar residues: residues 336–354, 363–395, and 427–445; these read QTSS…SQYP, QSAT…TSSG, and NMQT…YPTL. Residues 454-493 form a PEST region; it reads PTPANHVTSLPPLKVLSGEYSHPSQPNAQSPHHDLGSGKR. Over residues 505–526 the composition is skewed to basic and acidic residues; the sequence is RSHEETFGSDERPLHNGMRPDM.

It belongs to the velvet family. VeA subfamily. As to quaternary structure, component of the heterotrimeric velvet complex composed of laeA, veA and velB; VeA acting as a bridging protein between laeA and velB.

It localises to the nucleus. It is found in the cytoplasm. Its function is as follows. Component of the velvet transcription factor complex that controls sexual/asexual developmental ratio in response to light, promoting sexual development in the darkness while stimulating asexual sporulation under illumination. The velvet complex hat acts as a global regulator for secondary metabolite gene expression. Controls the expression of hundreds of genes, including those comprising more than a dozen known secondary metabolite gene clusters. Controls the expression of the gliotoxin gene cluster. Controls the expression of the fumagillin, fumitremorgin G, fumigaclavine C and glionitrin gene clusters. The regulation of the fumagillin gene cluster and fumagillin production is performed through direct control of the expression of fumR. Negatively regulates conidiation. Required for normal protease activity. This is Developmental and secondary metabolism regulator veA from Aspergillus fumigatus (strain ATCC MYA-4609 / CBS 101355 / FGSC A1100 / Af293) (Neosartorya fumigata).